The chain runs to 72 residues: DNA-directed RNA polymerase subunit omega (72 aa).

This sequence belongs to the RNA polymerase subunit omega family. The RNAP catalytic core consists of 2 alpha, 1 beta, 1 beta' and 1 omega subunit. When a sigma factor is associated with the core the holoenzyme is formed, which can initiate transcription.

The enzyme catalyses RNA(n) + a ribonucleoside 5'-triphosphate = RNA(n+1) + diphosphate. Functionally, promotes RNA polymerase assembly. Latches the N- and C-terminal regions of the beta' subunit thereby facilitating its interaction with the beta and alpha subunits. The protein is DNA-directed RNA polymerase subunit omega of Lactobacillus johnsonii (strain CNCM I-12250 / La1 / NCC 533).